The chain runs to 458 residues: Cysteine--tRNA ligase (458 aa).

Zn(2+) is bound at residue Cys29. The short motif at 31-41 (MTVYDLCHLGH) is the 'HIGH' region element. Residues Cys213, His238, and Glu242 each coordinate Zn(2+). The 'KMSKS' region signature appears at 270–274 (KMSKS). An ATP-binding site is contributed by Lys273.

Belongs to the class-I aminoacyl-tRNA synthetase family. As to quaternary structure, monomer. Requires Zn(2+) as cofactor.

Its subcellular location is the cytoplasm. The catalysed reaction is tRNA(Cys) + L-cysteine + ATP = L-cysteinyl-tRNA(Cys) + AMP + diphosphate. This is Cysteine--tRNA ligase from Acidovorax sp. (strain JS42).